Consider the following 91-residue polypeptide: Acyl carrier protein (91 aa).

The region spanning 6–81 (EEIIAELGQI…DIVAYIQKLE (76 aa)) is the Carrier domain. Serine 41 carries the O-(pantetheine 4'-phosphoryl)serine modification.

The protein belongs to the acyl carrier protein (ACP) family. Post-translationally, 4'-phosphopantetheine is transferred from CoA to a specific serine of apo-ACP by AcpS. This modification is essential for activity because fatty acids are bound in thioester linkage to the sulfhydryl of the prosthetic group.

The protein localises to the cytoplasm. The protein operates within lipid metabolism; fatty acid biosynthesis. Its function is as follows. Carrier of the growing fatty acid chain in fatty acid biosynthesis. In Rhodococcus erythropolis (strain PR4 / NBRC 100887), this protein is Acyl carrier protein.